Consider the following 466-residue polypeptide: tRNA modification GTPase MnmE (466 aa).

(6S)-5-formyl-5,6,7,8-tetrahydrofolate contacts are provided by Arg-25, Glu-82, and Lys-127. The region spanning 223–388 is the TrmE-type G domain; sequence GIKVVIAGQP…LRRQLLQIAG (166 aa). Asn-233 lines the K(+) pocket. GTP contacts are provided by residues 233 to 238, 252 to 258, 277 to 280, 346 to 349, and 369 to 371; these read NAGKSS, TPIAGTT, DTAG, NKAD, and SAR. Ser-237 contributes to the Mg(2+) binding site. K(+) contacts are provided by Thr-252, Ile-254, and Thr-257. Mg(2+) is bound at residue Thr-258. Residue Lys-466 participates in (6S)-5-formyl-5,6,7,8-tetrahydrofolate binding.

The protein belongs to the TRAFAC class TrmE-Era-EngA-EngB-Septin-like GTPase superfamily. TrmE GTPase family. As to quaternary structure, homodimer. Heterotetramer of two MnmE and two MnmG subunits. The cofactor is K(+).

The protein resides in the cytoplasm. Functionally, exhibits a very high intrinsic GTPase hydrolysis rate. Involved in the addition of a carboxymethylaminomethyl (cmnm) group at the wobble position (U34) of certain tRNAs, forming tRNA-cmnm(5)s(2)U34. This Acidovorax sp. (strain JS42) protein is tRNA modification GTPase MnmE.